The primary structure comprises 288 residues: MSGLKEIRGKIDSIRNIQKIAKAMEMISVAKIYQTQRRMLISKPYAETIRKVIDHISSGTLEYKHSYFLERKIQSVGYWVVSTDRGLAGGLNINLLKTLLYDFNKWSNEGITIRLAIIGSKGASFLRSIKQTEIVSCVYGIGDAPKMSALIGSVRVMLQLYDNNQIDRLYLAYNKFINTLTQSPQILQILPIISSKNSILQTKYWDYLYEPDSKVLLNSLLQRYIESQVYQGVVENLASEQSARMMAMKTASDNGEVIINDLKLFYNKARQTKITEELTEIVSGASVI.

It belongs to the ATPase gamma chain family. In terms of assembly, F-type ATPases have 2 components, CF(1) - the catalytic core - and CF(0) - the membrane proton channel. CF(1) has five subunits: alpha(3), beta(3), gamma(1), delta(1), epsilon(1). CF(0) has three main subunits: a, b and c.

The protein localises to the cell inner membrane. Produces ATP from ADP in the presence of a proton gradient across the membrane. The gamma chain is believed to be important in regulating ATPase activity and the flow of protons through the CF(0) complex. This is ATP synthase gamma chain from Blochmanniella pennsylvanica (strain BPEN).